We begin with the raw amino-acid sequence, 99 residues long: Elongin-C (99 aa).

Residue serine 2 is modified to N-acetylserine. Serine 2 is subject to Phosphoserine.

The protein belongs to the SKP1 family. As to quaternary structure, heterodimer with ELA1. Component of a CRL3 E3 ubiquitin ligase complex consisting of the cullin CUL3, the linker protein ELC1, the substrate receptor ELA1, and the RING protein HRT1. Interacts with CIN5. Interacts with PCL6. Interacts with SNF4. Interacts with the large RNA polymerase II subunit RPO21 in a manner dependent on DEF1. Interacts with DEF1. Interacts with RAD7. Interacts with RAD16.

Its subcellular location is the cytoplasm. It is found in the nucleus. In terms of biological role, as part of the CRL3 E3 ubiquitin ligase complex; polyubiquitylates monoubiquitylated RNA polymerase II subunit RPO21 to trigger its proteolysis; plays a role in global genomic repair. Prevents degradation of interacting proteins like PCL6 by the proteasome. In Saccharomyces cerevisiae (strain ATCC 204508 / S288c) (Baker's yeast), this protein is Elongin-C (ELC1).